Here is a 122-residue protein sequence, read N- to C-terminus: Large ribosomal subunit protein uL14 (122 aa).

Belongs to the universal ribosomal protein uL14 family. In terms of assembly, part of the 50S ribosomal subunit. Forms a cluster with proteins L3 and L19. In the 70S ribosome, L14 and L19 interact and together make contacts with the 16S rRNA in bridges B5 and B8.

In terms of biological role, binds to 23S rRNA. Forms part of two intersubunit bridges in the 70S ribosome. The polypeptide is Large ribosomal subunit protein uL14 (Mycobacterium sp. (strain KMS)).